The chain runs to 942 residues: Protein ZDS2 (942 aa).

The interval 1 to 28 (MVLMEDMQNKDGHNTVENSSGGTDSNNN) is disordered. A compositionally biased stretch (polar residues) spans 15-28 (TVENSSGGTDSNNN). Residue Ser-50 is modified to Phosphoserine. Disordered regions lie at residues 91–142 (SRNS…DDSI), 483–541 (SQES…NSSN), 617–654 (VVSSSESQPSKPTAPAVVEKKVELPTDTQASTHKKNSL), 682–728 (VKKE…DIDT), and 788–817 (SRDTTAGLEEDIGAEREDNTSPTAPQISTL). Residues 99-122 (SSKESLQESLHEENIIRSEQKEEQ) show a composition bias toward basic and acidic residues. Residues 123–134 (GSEDNDAYEEGD) show a composition bias toward acidic residues. Low complexity-rich tracts occupy residues 483-497 (SQESSLLSTDSSNNS), 518-541 (SSSEKSNTNNSEANHGWSWLNSSN), and 617-627 (VVSSSESQPSK). Positions 682–704 (VKKELKKKASHSSLSKFRKSPKK) are enriched in basic residues. The span at 807-816 (TSPTAPQIST) shows a compositional bias: polar residues.

The protein to yeast ZDS1/NRC1/CES1. In terms of assembly, interacts with SKG6.

Functionally, acts as a negative regulator of polarized growth via an alternative mechanism to ZDS1. In heat-stressed cells appears to play a role in localizing BCY1 to the cytoplasm. Seems to interact with, and down-regulate, CDC42. Also acts as a suppressor of PKC1. May act as an integration point for distinct signaling pathways helping to maintain a balance among these different pathways. In Saccharomyces cerevisiae (strain ATCC 204508 / S288c) (Baker's yeast), this protein is Protein ZDS2 (ZDS2).